A 460-amino-acid polypeptide reads, in one-letter code: GTPase Der (460 aa).

EngA-type G domains are found at residues 3-167 (FTFA…PEPD) and 189-364 (IRVA…AVWN). Residues 9-16 (GRPNVGKS), 56-60 (DTAGL), 119-122 (NKSE), 195-202 (GRPNAGKS), 242-246 (DTAGL), and 307-310 (NKWD) contribute to the GTP site. The 85-residue stretch at 365 to 449 (TRVPTAALNR…PVRIMLREKA (85 aa)) folds into the KH-like domain.

The protein belongs to the TRAFAC class TrmE-Era-EngA-EngB-Septin-like GTPase superfamily. EngA (Der) GTPase family. In terms of assembly, associates with the 50S ribosomal subunit.

Its function is as follows. GTPase that plays an essential role in the late steps of ribosome biogenesis. In Rhodopseudomonas palustris (strain BisB5), this protein is GTPase Der.